We begin with the raw amino-acid sequence, 95 residues long: Fatty acid-binding protein, liver (95 aa).

Residues Lys13 and Lys18 each carry the N6-succinyllysine modification. Ser21 carries the phosphoserine modification. Position 28 is an N6-succinyllysine (Lys28). A Phosphothreonine modification is found at Thr33. Ser38 carries the phosphoserine modification. N6-succinyllysine occurs at positions 39, 47, and 59. At Ser69 the chain carries Phosphoserine. Lys90 carries the N6-succinyllysine modification.

The protein belongs to the calycin superfamily. Fatty-acid binding protein (FABP) family. In terms of assembly, monomer.

The protein resides in the cytoplasm. Its function is as follows. This protein binds free fatty acids and their coenzyme A derivatives, bilirubin, and some other small molecules in the cytoplasm; it may be involved in intracellular lipid transport. The protein is Fatty acid-binding protein, liver (FABP1) of Chaetophractus villosus (South American armadillo).